The following is a 243-amino-acid chain: Transmembrane protein 174 (243 aa).

A run of 2 helical transmembrane segments spans residues 40 to 60 (LLFS…MGWI) and 73 to 93 (LLGP…VCKF). A disordered region spans residues 205–229 (AGHDRPSSDADQLEGTQMGEEERVC).

Interacts with SLC34A1; regulates SLC34A1 internalization by PTH and FGF23.

It localises to the endoplasmic reticulum membrane. The protein resides in the apical cell membrane. In terms of biological role, regulator of plasma phosphate homeostasis. Decreases serum inorganic phosphate (Pi) uptake by regulating the sodium-phosphate cotransporter SLC34A1 trafficking by PTH and FGF23 in the kidney. The polypeptide is Transmembrane protein 174 (Tmem174) (Rattus norvegicus (Rat)).